The primary structure comprises 364 residues: Sec-independent protein translocase protein TatC (364 aa).

A run of 7 helical transmembrane segments spans residues 42-62 (IALL…PRIF), 107-127 (MIAA…SFIT), 139-159 (LTFV…AYLT), 160-180 (LSTG…SVLD), 194-214 (IFGL…AGIV), 225-245 (PEIF…DPFT), and 246-266 (MLAL…IGWL). A disordered region spans residues 277-364 (TSPYADLDDD…STDVTHGDIT (88 aa)). Residues 282-295 (DLDDDETSPLDFDD) are compositionally biased toward acidic residues. Residues 301–320 (AASAGPAATATSPGTANPPG) show a composition bias toward low complexity. Polar residues predominate over residues 324–344 (PPGTANPVGTANPVGTGSSTP).

It belongs to the TatC family. As to quaternary structure, the Tat system comprises two distinct complexes: a TatABC complex, containing multiple copies of TatA, TatB and TatC subunits, and a separate TatA complex, containing only TatA subunits. Substrates initially bind to the TatABC complex, which probably triggers association of the separate TatA complex to form the active translocon.

The protein resides in the cell membrane. In terms of biological role, part of the twin-arginine translocation (Tat) system that transports large folded proteins containing a characteristic twin-arginine motif in their signal peptide across membranes. Together with TatB, TatC is part of a receptor directly interacting with Tat signal peptides. The sequence is that of Sec-independent protein translocase protein TatC from Frankia casuarinae (strain DSM 45818 / CECT 9043 / HFP020203 / CcI3).